The following is a 297-amino-acid chain: Probable esterase afoC (297 aa).

S136 acts as the Charge relay system in catalysis. Positions A204 to S217 are enriched in low complexity. The tract at residues A204–H226 is disordered. Residues D240 and H267 each act as charge relay system in the active site.

The protein belongs to the LovG family.

Functionally, probable esterase; part of the gene cluster that mediates the biosynthesis of asperfuranone, a probable antitumor agent. The polyketide synthase afoG is responsible for producing the 3,5-dimethyloctadienone moiety from acetyl-CoA, three malonyl-CoA, and two S-adenosyl methionines (SAM). The 3,5-dimethyloctadienone moiety is then loaded onto the SAT domain of afoE and extended with four malonyl-CoA and one SAM, which leads to the formation of 2,4-dihydroxy-6-(5,7-dimethyl-2-oxo-trans-3-trans-5-nonadienyl)-3-methylbenzaldehyde (compound 2) after reductive release and aldol condensation. AfoD is the next enzyme in the biosynthesis sequence and hydroxylates the side chain at the benzylic position of compound 2. After benzylic hydroxylation, a furan ring is formed after five-member ring hemiacetal formation and water elimination. AfoF and afoC are proposed to oxidize the R-diketone proton and to reduce the unconjugated carbonyl group, respectively, to generate asperfuranone. Since no intermediates could be isolated from afoF and afoC deletants, the sequence of these two enzymes is not fully understood. Moreover, since afoC deletant still produces a small amount of asperfuranone, other endogenous oxidoreductases might catalyze the same reaction with much less efficiency. The protein is Probable esterase afoC of Emericella nidulans (strain FGSC A4 / ATCC 38163 / CBS 112.46 / NRRL 194 / M139) (Aspergillus nidulans).